A 711-amino-acid polypeptide reads, in one-letter code: Zinc finger CCCH domain-containing protein 32 (711 aa).

The segment covering 1–21 (MEADGAAAAAAAGEASTEAGA) has biased composition (low complexity). Residues 1–23 (MEADGAAAAAAAGEASTEAGARP) are disordered. C3H1-type zinc fingers lie at residues 31 to 60 (LRRNTDCVYFLASPLTCKKGNECDFRHSDN), 62 to 88 (RMNPRDCWYWLNSNCLNPKCPFRHPPI), and 112 to 139 (GKQLVPCYYFKKGNCLKGDRCAFYHGPQ). Disordered regions lie at residues 221-246 (KSEKVKSSTPAALKESFTTSSGGDHP), 339-376 (RFNGMDEQDQMGHMYDGYERKRRRSSERSMERPFHSER), 405-561 (SSLA…EGPK), and 573-701 (AAWA…DDDD). Composition is skewed to basic and acidic residues over residues 364–376 (SERSMERPFHSER) and 413–427 (RNGEQRRRDERYRER). Residues 428 to 437 (AHGHRSHRDH) are compositionally biased toward basic residues. 2 stretches are compositionally biased toward basic and acidic residues: residues 460–509 (SPDR…RRSS) and 585–594 (KQDKSAEVSH). 2 stretches are compositionally biased toward acidic residues: residues 648-663 (EDIIEVDPVENQDADN) and 686-701 (ENAYEDDDEEYDDDDD).

The chain is Zinc finger CCCH domain-containing protein 32 from Oryza sativa subsp. japonica (Rice).